A 786-amino-acid polypeptide reads, in one-letter code: Aculeacin-A acylase (786 aa).

A signal peptide spans 1 to 22; sequence MTSSYMRLKAAAIAFGVIVATA. Residues 23-34 constitute a propeptide that is removed on maturation; it reads AVPSPASGREHD. The segment at 35-130 is substrate-binding; it reads GGYAALIRRA…PRDGVRAPCD (96 aa). A propeptide spans 215–229 (spacer peptide); sequence AAIAAALDGTSAGIG. The segment at 220 to 239 is possible recognition-sequence of an AAC processing enzyme; sequence ALDGTSAGIGSNAYGLGAQA. The Nucleophile role is filled by S230. The disordered stretch occupies residues 658–689; it reads ACNGSPASPSTRSVGDIHTDSRGERRIPIHGG. The span at 672–684 shows a compositional bias: basic and acidic residues; the sequence is GDIHTDSRGERRI.

The protein belongs to the peptidase S45 family. As to quaternary structure, heterodimer of a small subunit and a large subunit processed from the same precursor.

It is found in the secreted. In terms of biological role, catalyzes the hydrolysis of the palmitoyl moiety of the antifungal antibiotic, aculeacin-A, giving a hexapeptide moiety and a long chain fatty acid. In Actinoplanes utahensis, this protein is Aculeacin-A acylase (aac).